A 73-amino-acid polypeptide reads, in one-letter code: Large ribosomal subunit protein bL31 (73 aa).

It belongs to the bacterial ribosomal protein bL31 family. Type A subfamily. Part of the 50S ribosomal subunit.

Binds the 23S rRNA. The protein is Large ribosomal subunit protein bL31 of Rhizobium johnstonii (strain DSM 114642 / LMG 32736 / 3841) (Rhizobium leguminosarum bv. viciae).